The chain runs to 348 residues: High mobility group protein 20A (348 aa).

Disordered regions lie at residues 1-114 (MENL…YVRF) and 181-213 (SRKA…DTKE). 2 stretches are compositionally biased toward polar residues: residues 34-47 (SESS…QPVN) and 56-71 (SQVQ…TAEN). Over residues 72-82 (TEQKPEEEQQR) the composition is skewed to basic and acidic residues. Residues 83–97 (TKRGGWAKGRKRKKP) show a composition bias toward basic residues. A DNA-binding region (HMG box) is located at residues 104–172 (PKSPLTGYVR…RYMRELEQYQ (69 aa)). Basic and acidic residues predominate over residues 183-213 (KAQDRQKGKLHRQDGARQPVHDHEKEADTKE). A coiled-coil region spans residues 230–274 (SKAREAELRQLRKSNMEFEERNAALQKHVESMRTAVEKLEVDVIQ).

The protein resides in the nucleus. Its function is as follows. Plays a role in neuronal differentiation. The protein is High mobility group protein 20A (HMG20A) of Gallus gallus (Chicken).